Reading from the N-terminus, the 540-residue chain is Aquaporin-5 (540 aa).

The disordered stretch occupies residues 1 to 224; it reads MSGEGTDLPT…ESIDGYNYES (224 aa). The Cytoplasmic segment spans residues 1 to 263; that stretch reads MSGEGTDLPT…QWMNSNFKNH (263 aa). A compositionally biased stretch (polar residues) spans 25–44; sequence PGSSQQQLVPIAHTISSPSK. Composition is skewed to basic and acidic residues over residues 119 to 133, 140 to 155, 174 to 194, and 204 to 214; these read RAREDLYYSDREREN, RARDDHPHPDYHERSR, YFDDSSRSDLGKDRDLEKGMR, and SGEKVRRKSTD. The helical transmembrane segment at 264–284 threads the bilayer; that stretch reads FVATIGEFVGTTMFLFFAFAG. Residues 285–308 are Extracellular-facing; it reads TQVANIDSNTVNTTTGAATGFNIA. Asparagine 296 carries N-linked (GlcNAc...) asparagine glycosylation. Residues 309-329 form a helical membrane-spanning segment; sequence VQLYIAVIFGFSLMVNVWIFF. Over 330 to 332 the chain is Cytoplasmic; that stretch reads RIS. The chain crosses the membrane as a helical span at residues 333–353; sequence GGLFNPAVTLGMVLVGAIPIP. Topologically, residues 354 to 356 are extracellular; that stretch reads RAA. A helical transmembrane segment spans residues 357 to 377; sequence CLFFAQILGGIAASGMVLGLF. Residues 378–393 are Cytoplasmic-facing; the sequence is PTTFNVRTTLGASTST. The chain crosses the membrane as a helical span at residues 394 to 414; sequence VQGVFIEAILTAELVFTIFML. Residues 415 to 420 are Extracellular-facing; sequence AKEKHK. A helical transmembrane segment spans residues 421–441; the sequence is ATFIAPVGIGLALFIAEMVGV. The Cytoplasmic segment spans residues 442-467; it reads YYTGGSLNPARSFGPCVVSGSFDKEH. Residues 468 to 488 form a helical membrane-spanning segment; that stretch reads WIYWIGPITGTFIAVFFYKFI. Over 489 to 540 the chain is Extracellular; that stretch reads KMLEYEMANPGQDGDAKNDPTQNEKKREQILEERNRRYEKRNGSLRPGSRLS. Residues 499 to 540 are disordered; sequence GQDGDAKNDPTQNEKKREQILEERNRRYEKRNGSLRPGSRLS. Over residues 502 to 530 the composition is skewed to basic and acidic residues; that stretch reads GDAKNDPTQNEKKREQILEERNRRYEKRN. N-linked (GlcNAc...) asparagine glycosylation is present at asparagine 530.

This sequence belongs to the MIP/aquaporin (TC 1.A.8) family.

Its subcellular location is the membrane. The enzyme catalyses H2O(in) = H2O(out). Its function is as follows. Water channel required to facilitate the transport of water across membranes. May play a role in the vegetative growth. This Botryotinia fuckeliana (strain B05.10) (Noble rot fungus) protein is Aquaporin-5.